The following is a 473-amino-acid chain: Cysteine--tRNA ligase (473 aa).

Residue Cys-29 participates in Zn(2+) binding. Positions 31–41 (ATVQSAPHIGH) match the 'HIGH' region motif. Zn(2+) contacts are provided by Cys-207, His-232, and Glu-236. The short motif at 263 to 267 (KMSKS) is the 'KMSKS' region element. Residue Lys-266 coordinates ATP.

Belongs to the class-I aminoacyl-tRNA synthetase family. In terms of assembly, monomer. It depends on Zn(2+) as a cofactor.

The protein localises to the cytoplasm. The catalysed reaction is tRNA(Cys) + L-cysteine + ATP = L-cysteinyl-tRNA(Cys) + AMP + diphosphate. The chain is Cysteine--tRNA ligase from Corynebacterium kroppenstedtii (strain DSM 44385 / JCM 11950 / CIP 105744 / CCUG 35717).